The following is a 351-amino-acid chain: Cyanuric acid amidohydrolase (351 aa).

Positions 1–96 are RU A; the sequence is MPSLRAHVFR…HWTVFARETV (96 aa). Substrate is bound by residues arginine 53 and 77–78; that span reads SG. Residues 103–240 are RU B; it reads ALAIGVSRTP…HEIIVLGMSA (138 aa). Residue lysine 153 is part of the active site. Residues arginine 185 and 223–224 contribute to the substrate site; that span reads SS. Serine 223 serves as the catalytic Nucleophile. The tract at residues 246–351 is RU C; the sequence is LSIDHAVMRD…PVAIIVEKEQ (106 aa). Glutamate 283 serves as a coordination point for Mg(2+). Substrate contacts are provided by residues arginine 310 and 329 to 330; that span reads SG. Residues alanine 332, glutamine 335, glycine 336, proline 337, and glycine 340 each contribute to the Mg(2+) site.

Belongs to the cyclic amide hydrolase (CyAH) family. In terms of assembly, homotetramer.

The catalysed reaction is cyanurate + H2O = 1-carboxybiuret + H(+). Its pathway is xenobiotic degradation; atrazine degradation; biuret from cyanurate: step 1/1. Inhibited by barbituric acid. Responsible for the hydrolysis of cyanuric acid, an intermediate formed during catabolism of s-triazine based compounds in herbicides such as atrazine and polymers such as melamine. Catalyzes the hydrolytic opening of the s-triazine ring of cyanuric acid (2,4,6-trihydroxy-s-triazine) to yield carbon dioxide and carboxybiuret, which spontaneously decarboxylates to biuret. The protein is Cyanuric acid amidohydrolase of Rhizobium johnstonii (strain DSM 114642 / LMG 32736 / 3841) (Rhizobium leguminosarum bv. viciae).